We begin with the raw amino-acid sequence, 522 residues long: F-box only protein 7 (522 aa).

Residues 1 to 87 (MKLRVRLQKR…EDAIAAPNLP (87 aa)) are ubiquitin-like. The segment covering 88-132 (SSTVSEHSSVQNNDQPSLATSSSQSNIQDAQLHDSLQGQATQSEV) has biased composition (polar residues). The tract at residues 88–151 (SSTVSEHSSV…GQHFEAEAVP (64 aa)) is disordered. An important for interaction with PINK1 region spans residues 91 to 128 (VSEHSSVQNNDQPSLATSSSQSNIQDAQLHDSLQGQAT). Residues 128–168 (TQSEVWNDDSVSGPGQHFEAEAVPDVVDVEEGTGYYLAEPM) form an important for interaction with CDK6 region. Residues 179–323 (PHSLEILYQS…PLLAFTRQAL (145 aa)) are important for dimerization and interaction with PSMF1. In terms of domain architecture, F-box spans 328-374 (VFGLVVLPLELKLRIFRLLDVRSVLSLSAVCRDLCITSNDQLLWRCL). The tract at residues 380-522 (RDGSIRGRDT…WPTDSRLPFM (143 aa)) is important for interaction with CDK6. An omega-N-methylarginine mark is found at R431 and R451. Positions 481–484 (RFDP) match the RFDP motif motif. The tract at residues 484–522 (PVGPLPGPNPILPGRGGPSDRFPLRPSRGWPTDSRLPFM) is disordered. At R518 the chain carries Asymmetric dimethylarginine.

Part of the SCF (SKP1-CUL1-F-box) E3 ubiquitin-protein ligase complex SCF(FBXO7) formed of CUL1, SKP1, RBX1 and FBXO7. Interacts via its C-terminal proline-rich region with DLGAP5. Interacts with BIRC2. Interacts with CDK6 and promotes its interaction with D-type cyclin. Interacts (via the N-terminal Ubl domain) with PRKN. Interacts (via N-terminal region) with PINK1. Interacts with PSMF1.

The protein localises to the cytoplasm. It localises to the nucleus. The protein resides in the mitochondrion. Its subcellular location is the cytosol. It participates in protein modification; protein ubiquitination. In terms of biological role, substrate recognition component of a SCF (SKP1-CUL1-F-box protein) E3 ubiquitin-protein ligase complex which mediates the ubiquitination and subsequent proteasomal degradation of target proteins and plays a role in several biological processes such as cell cycle, cell proliferation, or maintenance of chromosome stability. Recognizes and ubiquitinates BIRC2 and the cell cycle regulator DLGAP5. Plays a role downstream of PINK1 in the clearance of damaged mitochondria via selective autophagy (mitophagy) by targeting PRKN to dysfunctional depolarized mitochondria. Promotes MFN1 ubiquitination. Mediates the ubiquitination and proteasomal degradation of UXT isoform 2, thereby impairing the NF-kappa-B signaling pathway. Inhibits NF-kappa-B pathway also by promoting the ubiquitinatioin of TRAF2. Affects the assembly state and activity of the proteasome in the cells including neurons by ubiquitinating the proteasomal subunit PSMA2 via 'Lys-63'-linked polyubiquitin chains. Promotes 'Lys-48'-linked polyubiquitination SIRT7, leading to the hydrogen peroxide-induced cell death. The sequence is that of F-box only protein 7 (FBXO7) from Bos taurus (Bovine).